The chain runs to 394 residues: Acid ceramidase (394 aa).

The N-terminal stretch at 1–20 (MLGRSLLTWVLAAAVTCAQA) is a signal peptide. Cysteine 30 and cysteine 339 are oxidised to a cystine. Cysteine 142 (nucleophile) is an active-site residue. N-linked (GlcNAc...) asparagine glycans are attached at residues asparagine 194, asparagine 258, asparagine 285, and asparagine 341. Cysteine 387 and cysteine 391 are joined by a disulfide.

It belongs to the acid ceramidase family. Heterodimer; disulfide-linked. The heterodimer is composed of the disulfide-linked alpha and beta chains produced by autocatalytic cleavage of the precursor. N-glycosylated. Post-translationally, proteolytically cleaved into two chains alpha and beta that remain associated via a disulfide bond. Cleavage gives rise to a conformation change that activates the enzyme. The same catalytic Cys residue mediates the autoproteolytic cleavage and subsequent hydrolysis of lipid substrates. The beta chain may undergo an additional C-terminal processing.

It is found in the lysosome. The protein localises to the secreted. The catalysed reaction is an N-acylsphing-4-enine + H2O = sphing-4-enine + a fatty acid. The enzyme catalyses N-dodecanoylsphing-4-enine + H2O = dodecanoate + sphing-4-enine. It catalyses the reaction N-tetradecanoylsphing-4-enine + H2O = tetradecanoate + sphing-4-enine. It carries out the reaction N-hexadecanoylsphing-4-enine + H2O = sphing-4-enine + hexadecanoate. The catalysed reaction is N-octadecanoylsphing-4-enine + H2O = sphing-4-enine + octadecanoate. The enzyme catalyses N-dodecanoyl-(4R)-hydroxysphinganine + H2O = (4R)-hydroxysphinganine + dodecanoate. It catalyses the reaction N-(dodecanoyl)-sphinganine + H2O = dodecanoate + sphinganine. It carries out the reaction N-(acetyl)-sphing-4-enine + H2O = sphing-4-enine + acetate. The catalysed reaction is N-(hexanoyl)sphing-4-enine + H2O = hexanoate + sphing-4-enine. The enzyme catalyses N-octanoylsphing-4-enine + H2O = octanoate + sphing-4-enine. It catalyses the reaction N-(9Z-octadecenoyl)-sphing-4-enine + H2O = sphing-4-enine + (9Z)-octadecenoate. It carries out the reaction N-dodecanoylethanolamine + H2O = dodecanoate + ethanolamine. The protein operates within lipid metabolism; sphingolipid metabolism. Functionally, lysosomal ceramidase that hydrolyzes sphingolipid ceramides into sphingosine and free fatty acids at acidic pH. Ceramides, sphingosine, and its phosphorylated form sphingosine-1-phosphate are bioactive lipids that mediate cellular signaling pathways regulating several biological processes including cell proliferation, apoptosis and differentiation. Has a higher catalytic efficiency towards C12-ceramides versus other ceramides. Also catalyzes the reverse reaction allowing the synthesis of ceramides from fatty acids and sphingosine. For the reverse synthetic reaction, the natural sphingosine D-erythro isomer is more efficiently utilized as a substrate compared to D-erythro-dihydrosphingosine and D-erythro-phytosphingosine, while the fatty acids with chain lengths of 12 or 14 carbons are the most efficiently used. Also has an N-acylethanolamine hydrolase activity. By regulating the levels of ceramides, sphingosine and sphingosine-1-phosphate in the epidermis, mediates the calcium-induced differentiation of epidermal keratinocytes. Also indirectly regulates tumor necrosis factor/TNF-induced apoptosis. By regulating the intracellular balance between ceramides and sphingosine, in adrenocortical cells, probably also acts as a regulator of steroidogenesis. The sequence is that of Acid ceramidase from Rattus norvegicus (Rat).